A 446-amino-acid chain; its full sequence is Sterile alpha motif domain-containing protein 7 (446 aa).

The segment at 94–168 is required for localization to nuclear polycomb bodies; the sequence is HTARTEMEMY…NLQGNPMLAA (75 aa). Disordered stretches follow at residues 187–207 and 225–277; these read NTGN…QAEE and KDPD…AWDD. Over residues 232-249 the composition is skewed to polar residues; it reads PSNQKSSETNEKPTTALA. Positions 327–392 constitute an SAM domain; the sequence is WTVDDVHSFI…SQVSQHVGSM (66 aa).

Monomer, homodimer and homooligomer. Component of a Polycomb group (PcG) multiprotein PRC1-like complex. Interacts with PHC2, NR2E3 and SAMD11. Interacts with RNF1 in a PHC2-dependent manner. Expressed in the retina (at protein level). Expressed in the retinal inner and outer nuclear layers.

The protein resides in the nucleus. The protein localises to the cytoplasm. Component of a Polycomb group (PcG) multiprotein PRC1-like complex, essential for establishing rod photoreceptor cell identity and function by silencing nonrod gene expression in developing rod photoreceptor cells. Via its association with the PRC1-like complex, promotes epigenetic repressive marks H3K27me3 and H2AK119ub marks in nonrod genes, silencing their transcription. Represses Crx-controlled photoreceptor-specific gene expression. This chain is Sterile alpha motif domain-containing protein 7 (SAMD7), found in Homo sapiens (Human).